A 538-amino-acid polypeptide reads, in one-letter code: Acetylcholine receptor subunit alpha-type acr-7 (538 aa).

Positions 1-27 (MMVQSIQIVLPVALFFLIVFNGFTVEG) are cleaved as a signal peptide. Residues 28–250 (SKKEAQLYRD…LHLRRRTFYY (223 aa)) lie on the Extracellular side of the membrane. Residues N41 and N101 are each glycosylated (N-linked (GlcNAc...) asparagine). 2 disulfides stabilise this stretch: C160/C174 and C229/C230. Transmembrane regions (helical) follow at residues 251–271 (VFNV…AFCL), 280–300 (IGLQ…LSEM), and 313–333 (VFFS…ILVL). Residues 334-513 (NIRYRQITNH…FAAQAVDRFC (180 aa)) lie on the Cytoplasmic side of the membrane. Residues 514-534 (LIIFTIVFIICCFIFVAIPPI) traverse the membrane as a helical segment.

Belongs to the ligand-gated ion channel (TC 1.A.9) family. Acetylcholine receptor (TC 1.A.9.1) subfamily. Forms a homooligomeric channel blocked by alpha-bungarotoxin. The structure is probably pentameric.

The protein resides in the postsynaptic cell membrane. It localises to the cell membrane. Functionally, after binding acetylcholine, the AChR responds by an extensive change in conformation that affects all subunits and leads to opening of an ion-conducting channel across the plasma membrane. This chain is Acetylcholine receptor subunit alpha-type acr-7 (acr-7), found in Caenorhabditis elegans.